The sequence spans 318 residues: Guanidinopropionase (318 aa).

His126, Asp148, His150, Asp152, Asp240, and Asp242 together coordinate Mn(2+).

Belongs to the arginase family. Agmatinase subfamily. Homohexamer. It depends on Mn(2+) as a cofactor.

The catalysed reaction is 3-guanidinopropanoate + H2O = urea + beta-alanine. Its function is as follows. Catalyzes the hydrolysis of 3-guanidinopropanoate to beta-alanine and urea. Possesses low activity against 4-guanidinobutanoate. Has no activity against arginine and agmatine. The polypeptide is Guanidinopropionase (gpuA) (Pseudomonas aeruginosa (strain ATCC 15692 / DSM 22644 / CIP 104116 / JCM 14847 / LMG 12228 / 1C / PRS 101 / PAO1)).